The primary structure comprises 41 residues: Photosystem II reaction center protein L (41 aa).

A helical membrane pass occupies residues 20-40 (SLYLGLLLVFVVGILFSSYFF).

Belongs to the PsbL family. PSII is composed of 1 copy each of membrane proteins PsbA, PsbB, PsbC, PsbD, PsbE, PsbF, PsbH, PsbI, PsbJ, PsbK, PsbL, PsbM, PsbT, PsbX, PsbY, PsbZ, Psb30/Ycf12, peripheral proteins PsbO, CyanoQ (PsbQ), PsbU, PsbV and a large number of cofactors. It forms dimeric complexes.

It is found in the cellular thylakoid membrane. Its function is as follows. One of the components of the core complex of photosystem II (PSII). PSII is a light-driven water:plastoquinone oxidoreductase that uses light energy to abstract electrons from H(2)O, generating O(2) and a proton gradient subsequently used for ATP formation. It consists of a core antenna complex that captures photons, and an electron transfer chain that converts photonic excitation into a charge separation. This subunit is found at the monomer-monomer interface and is required for correct PSII assembly and/or dimerization. The sequence is that of Photosystem II reaction center protein L from Trichodesmium erythraeum (strain IMS101).